Reading from the N-terminus, the 148-residue chain is Transcription antitermination protein NusB (148 aa).

It belongs to the NusB family.

Its function is as follows. Involved in transcription antitermination. Required for transcription of ribosomal RNA (rRNA) genes. Binds specifically to the boxA antiterminator sequence of the ribosomal RNA (rrn) operons. The chain is Transcription antitermination protein NusB from Novosphingobium aromaticivorans (strain ATCC 700278 / DSM 12444 / CCUG 56034 / CIP 105152 / NBRC 16084 / F199).